Here is a 134-residue protein sequence, read N- to C-terminus: Large ribosomal subunit protein uL14 (134 aa).

Belongs to the universal ribosomal protein uL14 family. As to quaternary structure, in the 70S ribosome, L14 and L19 interact and together make contacts with the 16S rRNA in bridges B5 and B8. Part of the 50S ribosomal subunit. Forms a cluster with proteins L3 and L19.

Its function is as follows. Forms part of two intersubunit bridges in the 70S ribosome. Binds to 23S rRNA. This chain is Large ribosomal subunit protein uL14, found in Deinococcus radiodurans (strain ATCC 13939 / DSM 20539 / JCM 16871 / CCUG 27074 / LMG 4051 / NBRC 15346 / NCIMB 9279 / VKM B-1422 / R1).